We begin with the raw amino-acid sequence, 123 residues long: Loki profilin-3 (123 aa).

The protein belongs to the Asgard profilin family.

It localises to the cytoplasm. Its subcellular location is the cytoskeleton. Its function is as follows. Binds to actin and affects the structure of the cytoskeleton. At high concentrations inhibits spontaneous rabbit actin nucleation. This strongly suggests this archaea has a profilin-regulated actin system, and actin-type genes can be identified in this organism. In Lokiarchaeum sp. (strain GC14_75), this protein is Loki profilin-3.